We begin with the raw amino-acid sequence, 175 residues long: ATP-dependent protease subunit HslV (175 aa).

Thr2 is a catalytic residue. 3 residues coordinate Na(+): Gly158, Cys161, and Thr164.

The protein belongs to the peptidase T1B family. HslV subfamily. In terms of assembly, a double ring-shaped homohexamer of HslV is capped on each side by a ring-shaped HslU homohexamer. The assembly of the HslU/HslV complex is dependent on binding of ATP.

The protein resides in the cytoplasm. It carries out the reaction ATP-dependent cleavage of peptide bonds with broad specificity.. Allosterically activated by HslU binding. Protease subunit of a proteasome-like degradation complex believed to be a general protein degrading machinery. The polypeptide is ATP-dependent protease subunit HslV (Histophilus somni (strain 129Pt) (Haemophilus somnus)).